Reading from the N-terminus, the 239-residue chain is Uridylate kinase (239 aa).

Position 10-13 (10-13 (KLSG)) interacts with ATP. Residue G53 coordinates UMP. ATP contacts are provided by G54 and R58. Residues D73 and 135-142 (TGRPYFTT) each bind UMP. Positions 163, 169, and 172 each coordinate ATP.

This sequence belongs to the UMP kinase family. Homohexamer.

Its subcellular location is the cytoplasm. It carries out the reaction UMP + ATP = UDP + ADP. It participates in pyrimidine metabolism; CTP biosynthesis via de novo pathway; UDP from UMP (UMPK route): step 1/1. Inhibited by UTP. Functionally, catalyzes the reversible phosphorylation of UMP to UDP. In Mycoplasmopsis synoviae (strain 53) (Mycoplasma synoviae), this protein is Uridylate kinase.